The following is a 238-amino-acid chain: MKLLISNQYGAIVMALVPFIYGMLLANPVWAHIFLLLGWFSLYLMTYPFLNLFKGKNLELYKKWSVIYFAAAVIFAIPALIYNWQVLYFMFAMLPFVAVNIYFTKKKDERNLWNDLAGILIFALAGMGSYYFSDRTFDEKILWVAIYPTLFFIGTTLYVKSMMRERKNPRYFWASVIFHLLCALIFVVSQQFILALAFVPGLVRAVYLPTKKLSVMQVGLIEFAITAVFFILLLVATL.

The next 7 helical transmembrane spans lie at 19 to 39 (FIYG…LLGW), 64 to 84 (WSVI…IYNW), 85 to 105 (QVLY…YFTK), 112 to 132 (LWND…SYYF), 141 to 161 (ILWV…YVKS), 176 to 196 (VIFH…ILAL), and 218 to 238 (VGLI…VATL).

To B.subtilis YwiC.

The protein resides in the cell membrane. This is an uncharacterized protein from Haemophilus influenzae (strain ATCC 51907 / DSM 11121 / KW20 / Rd).